A 452-amino-acid polypeptide reads, in one-letter code: Metacaspase-1 (452 aa).

The disordered stretch occupies residues 1 to 97; the sequence is MYPGAGRPTY…GPPLQGRPRD (97 aa). The segment covering 16–41 has biased composition (low complexity); sequence QKGPYGQPQYQQQYAPPYPERYQQPY. Catalysis depends on residues histidine 238 and cysteine 294.

This sequence belongs to the peptidase C14B family.

In terms of biological role, involved in cell death (apoptosis). The polypeptide is Metacaspase-1 (MCA1) (Eremothecium gossypii (strain ATCC 10895 / CBS 109.51 / FGSC 9923 / NRRL Y-1056) (Yeast)).